The chain runs to 209 residues: Large ribosomal subunit protein uL3 (209 aa).

Residues Gly-144 to Met-165 form a disordered region.

It belongs to the universal ribosomal protein uL3 family. Part of the 50S ribosomal subunit. Forms a cluster with proteins L14 and L19.

Functionally, one of the primary rRNA binding proteins, it binds directly near the 3'-end of the 23S rRNA, where it nucleates assembly of the 50S subunit. The sequence is that of Large ribosomal subunit protein uL3 from Clostridium novyi (strain NT).